We begin with the raw amino-acid sequence, 312 residues long: Tumor necrosis factor receptor type 1-associated DEATH domain protein (312 aa).

Positions 147-163 (LRDEELAELEDALRNLK) match the Nuclear export signal motif. A disordered region spans residues 170–195 (GGDGEVASAPLQPPVPSLSEVKPPPP). The Death domain maps to 179–289 (PLQPPVPSLS…ATLQRLVEAL (111 aa)). Residues 180-195 (LQPPVPSLSEVKPPPP) are compositionally biased toward pro residues. Residues 222-289 (FARSVGLKWR…ATLQRLVEAL (68 aa)) form an interaction with KRT14 and KRT18 region. A Nuclear localization signal motif is present at residues 231–244 (RKVGRSLQRGCRAL). Residues arginine 235 and arginine 245 are each glycosylated ((Microbial infection) N-beta-linked (GlcNAc) arginine).

Stimulation of TNF-alpha receptor TNFRSF1A leads to the formation of two distinct signaling complexes. Plasma membrane-bound complex I is composed of TNFRSF1A, TRADD, RIPK1, TRAF2 and BIRC2/c-IAP1 or BIRC3 which interacts with CHUCK/IKK-alpha, IKBKB/IKK-beta and IKBKG/IKK-gamma promoting cell survival. Subsequently, TRADD, RIPK1 and TRAF2 dissociate from TNFRSF1A and form cytoplasmic complex II with FADD and caspase CASP8 promoting cell apoptosis. Within complex I, interacts with TNFRSF1A/TNFR1, TRAF2 and kinase RIPK1. Within complex I, interacts with TRPC4AP; the interaction promotes NF-kappa B activation. UXT1 associates with complex I; the interaction prevents the formation of complex II. Within complex I Interacts with scaffold protein DAB2IP. Interacts with autophagy receptor SQSTM1. Interacts with E3 ligase TRIP12. Interacts with kinase HIPK2. Interacts with keratin KRT14. Interacts with keratin KRT18. Interacts with keratins KRT16 and KRT17. Interacts with FADD. Interacts with TOMM70. Interacts with TMC8; the interaction impairs the formation of complex I and facilites complex II formation. In terms of processing, (Microbial infection) Glycosylated at Arg-235 by enteropathogenic E.coli protein NleB1, C.rodentium protein NleB and S.typhimurium proteins Ssek1 and Ssek3: arginine GlcNAcylation prevents homotypic/heterotypic death domain interactions and assembly of the oligomeric TNFRSF1A/TNFR1 complex, thereby disrupting TNF signaling. In terms of tissue distribution, found in all examined tissues.

It localises to the nucleus. It is found in the cytoplasm. The protein localises to the cytoskeleton. Functionally, adapter molecule for TNFRSF1A/TNFR1 that specifically associates with the cytoplasmic domain of activated TNFRSF1A/TNFR1 mediating its interaction with FADD. Overexpression of TRADD leads to two major TNF-induced responses, apoptosis and activation of NF-kappa-B. The nuclear form acts as a tumor suppressor by preventing ubiquitination and degradation of isoform p19ARF/ARF of CDKN2A by TRIP12: acts by interacting with TRIP12, leading to disrupt interaction between TRIP12 and isoform p19ARF/ARF of CDKN2A. In Homo sapiens (Human), this protein is Tumor necrosis factor receptor type 1-associated DEATH domain protein.